The primary structure comprises 166 residues: PTS system glucose-specific EIIA component (166 aa).

The 105-residue stretch at 34–138 folds into the PTS EIIA type-1 domain; sequence DPVFAQKMMG…SVISPIIITN (105 aa). Residues H71 and H86 each contribute to the Zn(2+) site. H86 serves as the catalytic Tele-phosphohistidine intermediate; for EIIA activity. At H86 the chain carries Phosphohistidine; by HPr.

As to quaternary structure, heterodimer with glycerol kinase (glpk). Requires Zn(2+) as cofactor.

Its subcellular location is the cytoplasm. Functionally, the phosphoenolpyruvate-dependent sugar phosphotransferase system (sugar PTS), a major carbohydrate active transport system, catalyzes the phosphorylation of incoming sugar substrates concomitantly with their translocation across the cell membrane. The enzyme II complex composed of PtsG and Crr is involved in glucose transport. In Staphylococcus aureus (strain Mu50 / ATCC 700699), this protein is PTS system glucose-specific EIIA component (crr).